We begin with the raw amino-acid sequence, 535 residues long: Beta-glucosidase 20 (535 aa).

The signal sequence occupies residues 1–24; sequence MGRFHKFPLLGLVLFLGLTGSLIA. Residues Q56 and H159 each contribute to the a beta-D-glucoside site. A glycan (N-linked (GlcNAc...) asparagine) is linked at N187. 204–205 is an a beta-D-glucoside binding site; sequence NE. The Proton donor role is filled by E205. C224 and C235 are joined by a disulfide. Y351 and E424 together coordinate a beta-D-glucoside. E424 (nucleophile) is an active-site residue. N468 carries an N-linked (GlcNAc...) asparagine glycan. A beta-D-glucoside contacts are provided by residues W475, 482 to 483, and F491; that span reads EW. An N-linked (GlcNAc...) asparagine glycan is attached at N501. The short motif at 532-535 is the Prevents secretion from ER element; it reads HDEL.

The protein belongs to the glycosyl hydrolase 1 family.

The protein localises to the endoplasmic reticulum lumen. The catalysed reaction is Hydrolysis of terminal, non-reducing beta-D-glucosyl residues with release of beta-D-glucose.. The chain is Beta-glucosidase 20 from Arabidopsis thaliana (Mouse-ear cress).